Reading from the N-terminus, the 372-residue chain is Serine/threonine-protein kinase 17B (372 aa).

Residues 33-293 (ILTSKELGRG…AEICLSHSWL (261 aa)) enclose the Protein kinase domain. ATP-binding positions include 39–47 (LGRGKFAVV) and lysine 62. Aspartate 158 functions as the Proton acceptor in the catalytic mechanism. Residues 305–362 (EETSSSSQTQDHSVRSSEDKTSKSSCNGTCGDREDKENIPEDSSMVSKRFRFDDSLPN) form a disordered region. Basic and acidic residues predominate over residues 316 to 326 (HSVRSSEDKTS).

The protein belongs to the protein kinase superfamily. CAMK Ser/Thr protein kinase family. DAP kinase subfamily. Interacts with CHP1; the interaction induces CHP1 to translocate from the Golgi to the nucleus. Post-translationally, autophosphorylated. As to expression, highly expressed in placenta, lung, pancreas. Lower levels in heart, brain, liver, skeletal muscle and kidney.

It is found in the nucleus. The protein localises to the cell membrane. It localises to the endoplasmic reticulum-Golgi intermediate compartment. The enzyme catalyses L-seryl-[protein] + ATP = O-phospho-L-seryl-[protein] + ADP + H(+). It carries out the reaction L-threonyl-[protein] + ATP = O-phospho-L-threonyl-[protein] + ADP + H(+). Functionally, phosphorylates myosin light chains. Acts as a positive regulator of apoptosis. In Homo sapiens (Human), this protein is Serine/threonine-protein kinase 17B (STK17B).